A 496-amino-acid chain; its full sequence is Ankyrin repeat domain-containing protein 34A (496 aa).

ANK repeat units lie at residues 4 to 33 (TEGH…YVNE), 37 to 72 (QGET…DPNI), 76 to 106 (LGRT…DPSV), and 110 to 139 (AGAS…AKGT). Gln15 carries the post-translational modification N5-methylglutamine. 2 stretches are compositionally biased toward polar residues: residues 147-162 (DTSP…YLNS) and 180-191 (FCTSPSEIQLQT). A disordered region spans residues 147–473 (DTSPSGTKKT…TKRKLVRRHS (327 aa)). Residues 204–214 (AQEEEEKRDVF) are compositionally biased toward basic and acidic residues. Over residues 218 to 233 (LPKPPDDPSPSEPLPK) the composition is skewed to pro residues. The span at 234 to 243 (PPRHPPKPLK) shows a compositional bias: basic residues. A Phosphothreonine modification is found at Thr316. Residues 463–473 (RTKRKLVRRHS) are compositionally biased toward basic residues.

Belongs to the ANKRD34 family. Post-translationally, methylated at Gln-15 by N6AMT1.

The polypeptide is Ankyrin repeat domain-containing protein 34A (ANKRD34A) (Homo sapiens (Human)).